The following is a 371-amino-acid chain: Neuropeptide S receptor (371 aa).

At 1–52 the chain is on the extracellular side; the sequence is MPANFTEGSFDSNGTGQMLDSSPVACTETVTFTEVVEGKEWGSFYYSFKTEQ. 2 N-linked (GlcNAc...) asparagine glycosylation sites follow: asparagine 4 and asparagine 13. Residues 53-73 form a helical membrane-spanning segment; that stretch reads LITLWVLFVFTIVGNSVVLFS. Over 74–82 the chain is Cytoplasmic; sequence TWRRKRKSR. A helical transmembrane segment spans residues 83–103; the sequence is MTFFVTQLAITDSFTGLVNIL. The Extracellular segment spans residues 104 to 123; the sequence is TDIIWRFTGDFMAPDLVCRV. Cysteine 121 and cysteine 197 are disulfide-bonded. Residues 124-144 traverse the membrane as a helical segment; the sequence is VRYLQVVLLYASTYVLVSLSI. Topologically, residues 145–164 are cytoplasmic; that stretch reads DRYHAIVYPMKFLQGEKQAK. Residues 165–185 form a helical membrane-spanning segment; that stretch reads VLIVIAWSLSFLFSIPTLIIF. Over 186–212 the chain is Extracellular; that stretch reads GKRTLSNGEVQCWALWPDDSYWTPYMT. Residues 213–233 form a helical membrane-spanning segment; it reads IVAFLVYFIPLTIISVMYGIV. At 234–275 the chain is on the cytoplasmic side; that stretch reads IRTIWIKSKTYETVISNCSDGKLCSSYNRGLISKAKIKAIKY. The helical transmembrane segment at 276-296 threads the bilayer; sequence SIVIILAFICCWSPYFLFDIL. The Extracellular portion of the chain corresponds to 297–312; that stretch reads DNFNLLPDTQERFYAS. Residues 313–333 traverse the membrane as a helical segment; sequence VIIQNLPALNSAINPLIYCVF. At 334–371 the chain is on the cytoplasmic side; it reads SSSISFPCGERRSQDSIMTFRERTERHEMQILSKPEFI.

The protein belongs to the G-protein coupled receptor 1 family. Vasopressin/oxytocin receptor subfamily.

The protein localises to the cell membrane. Its function is as follows. G-protein coupled receptor for neuropeptide S (NPS). Promotes mobilization of intracellular Ca(2+) stores. Inhibits cell growth in response to NPS binding. Involved in pathogenesis of asthma and other IgE-mediated diseases. This chain is Neuropeptide S receptor (NPSR1), found in Macaca mulatta (Rhesus macaque).